Consider the following 168-residue polypeptide: Large ribosomal subunit protein uL10 (168 aa).

It belongs to the universal ribosomal protein uL10 family. Part of the ribosomal stalk of the 50S ribosomal subunit. The N-terminus interacts with L11 and the large rRNA to form the base of the stalk. The C-terminus forms an elongated spine to which L12 dimers bind in a sequential fashion forming a multimeric L10(L12)X complex.

Functionally, forms part of the ribosomal stalk, playing a central role in the interaction of the ribosome with GTP-bound translation factors. This Photorhabdus laumondii subsp. laumondii (strain DSM 15139 / CIP 105565 / TT01) (Photorhabdus luminescens subsp. laumondii) protein is Large ribosomal subunit protein uL10.